Reading from the N-terminus, the 232-residue chain is uncharacterized protein (232 aa).

It localises to the cytoplasm. Its subcellular location is the nucleus. This is an uncharacterized protein from Saccharomyces cerevisiae (strain ATCC 204508 / S288c) (Baker's yeast).